The primary structure comprises 252 residues: Triosephosphate isomerase (252 aa).

8–10 (NWK) contributes to the substrate binding site. Residue His95 is the Electrophile of the active site. Catalysis depends on Glu167, which acts as the Proton acceptor. Residues Gly173, Ser212, and 233 to 234 (GG) each bind substrate.

Belongs to the triosephosphate isomerase family. In terms of assembly, homodimer.

It localises to the cytoplasm. The catalysed reaction is D-glyceraldehyde 3-phosphate = dihydroxyacetone phosphate. The protein operates within carbohydrate biosynthesis; gluconeogenesis. Its pathway is carbohydrate degradation; glycolysis; D-glyceraldehyde 3-phosphate from glycerone phosphate: step 1/1. Functionally, involved in the gluconeogenesis. Catalyzes stereospecifically the conversion of dihydroxyacetone phosphate (DHAP) to D-glyceraldehyde-3-phosphate (G3P). In Lawsonia intracellularis (strain PHE/MN1-00), this protein is Triosephosphate isomerase.